The following is a 414-amino-acid chain: Bifunctional protein GlmU (414 aa).

The segment at methionine 1–asparagine 208 is pyrophosphorylase. UTP contacts are provided by residues leucine 6–glycine 9, glutamine 74, and glycine 79. Residues threonine 80, glycine 130, asparagine 142, and asparagine 162 each coordinate N-acetyl-alpha-D-glucosamine 1-phosphate. The segment at glycine 209–leucine 228 is linker. The segment at lysine 229–asparagine 414 is N-acetyltransferase. The active-site Proton acceptor is the histidine 312. Residues alanine 388 and lysine 405 each coordinate acetyl-CoA.

In the N-terminal section; belongs to the N-acetylglucosamine-1-phosphate uridyltransferase family. It in the C-terminal section; belongs to the transferase hexapeptide repeat family.

The enzyme catalyses N-acetyl-alpha-D-glucosamine 1-phosphate + UTP + H(+) = UDP-N-acetyl-alpha-D-glucosamine + diphosphate. It catalyses the reaction alpha-D-glucosamine 1-phosphate + acetyl-CoA = N-acetyl-alpha-D-glucosamine 1-phosphate + CoA + H(+). The protein operates within nucleotide-sugar biosynthesis; UDP-N-acetyl-alpha-D-glucosamine biosynthesis; N-acetyl-alpha-D-glucosamine 1-phosphate from alpha-D-glucosamine 6-phosphate (route II): step 2/2. Its pathway is nucleotide-sugar biosynthesis; UDP-N-acetyl-alpha-D-glucosamine biosynthesis; UDP-N-acetyl-alpha-D-glucosamine from N-acetyl-alpha-D-glucosamine 1-phosphate: step 1/1. In terms of biological role, catalyzes the last two sequential reactions in the de novo biosynthetic pathway for UDP-N-acetyl-glucosamine (UDP-GlcNAc). Responsible for the acetylation of GlcN-1-P to GlcNAc-1-P, and for the uridyl transfer from UTP to GlcNAc-1-P, to produce UDP-GlcNAc and pyrophosphate. The protein is Bifunctional protein GlmU of Methanococcus vannielii (strain ATCC 35089 / DSM 1224 / JCM 13029 / OCM 148 / SB).